The primary structure comprises 557 residues: Estrogen receptor beta (557 aa).

The tract at residues 1 to 154 (MMAAASSPEK…SSGGKADLHY (154 aa)) is modulating. 2 consecutive NR C4-type zinc fingers follow at residues 155-175 (CAVCHDYASGYHYGVWSCEGC) and 191-215 (CPATNQCTIDKNRRKSCQACRLRKC). The segment at residues 155-220 (CAVCHDYASG…RLRKCYEVGM (66 aa)) is a DNA-binding region (nuclear receptor). A disordered region spans residues 240–268 (LTRLSSQGKTAEPKGITGPAEGSLNKPEK). Residues 272-508 (TPEQLIERIL…DLLLEMLDAH (237 aa)) enclose the NR LBD domain. The segment at 513 to 557 (SCLPHQPPQQDSKDQSEVPAPLHSSAGGPSNTWTPSSARAGGESQ) is disordered. The span at 539–557 (GGPSNTWTPSSARAGGESQ) shows a compositional bias: polar residues.

Belongs to the nuclear hormone receptor family. NR3 subfamily. As to quaternary structure, binds DNA as a homodimer. Can form a heterodimer with ER-alpha.

Its subcellular location is the nucleus. Functionally, binds estrogens with an affinity similar to that of ER-alpha, and activates expression of reporter genes containing estrogen response elements (ERE) in an estrogen-dependent manner. This Oreochromis niloticus (Nile tilapia) protein is Estrogen receptor beta (esr2).